A 287-amino-acid polypeptide reads, in one-letter code: Ribonuclease Z (287 aa).

Residues His-64, His-66, Asp-68, His-69, His-124, Asp-191, and His-250 each contribute to the Zn(2+) site. The active-site Proton acceptor is the Asp-68.

The protein belongs to the RNase Z family. As to quaternary structure, homodimer. The cofactor is Zn(2+).

It carries out the reaction Endonucleolytic cleavage of RNA, removing extra 3' nucleotides from tRNA precursor, generating 3' termini of tRNAs. A 3'-hydroxy group is left at the tRNA terminus and a 5'-phosphoryl group is left at the trailer molecule.. Its function is as follows. Zinc phosphodiesterase, which displays some tRNA 3'-processing endonuclease activity. Probably involved in tRNA maturation, by removing a 3'-trailer from precursor tRNA. In Pyrobaculum islandicum (strain DSM 4184 / JCM 9189 / GEO3), this protein is Ribonuclease Z.